A 629-amino-acid polypeptide reads, in one-letter code: MATYNADAIEVLSGLDPVRKRPGMYTDTTRPNHLAQEVIDNSVDEALAGHAKSVQVILHQDNSLEVIDDGRGMPVDIHPEEGVPGVELILTKLHAGGKFSNKNYQFSGGLHGVGISVVNALSTRVEVRVKRDANEYRMTFADGFKDSDLEVIGTVGKRNTGTSVHFWPDPKYFDSAKFSVSRLKHVLKAKAVLCPGLSVVFEDKNTGERVEWHFEDGLRSYLTDAVAELPRLPDEPFCGNLEGSKEAVSWALLWLPEGGESVQESYVNLIPTAQGGTHVNGLRQGLLDAMREFCEFRNLLPRGVKLAPEDVWERIAFVLSMKMQEPQFSGQTKERLSSREAAAFVSGVVKDAFSLWLNEHAEIGLQLAELAISNAGRRLKAGKKVERKKITQGPALPGKLADCAGQEPMRAELFLVEGDSAGGSAKQARDKEFQAIMPLRGKILNTWEVDGGEVLASQEVHDIAVAIGVDPGASDLAQLRYGKICILADADSDGLHIATLLCALFVRHFRPLVEAGHVYVAMPPLYRIDLGKDIYYALDEAERDGILERLAAEKKRGKPQVTRFKGLGEMNPLQLRETTMDPNTRRLVQLTLEDATGTLEIMDMLLAKKRAGDRKSWLESKGNLAEVLV.

ATP contacts are provided by residues Tyr-4, Asn-41, Asp-68, 109–115 (GLHGVGI), and Lys-333. Residues 411 to 524 (AELFLVEGDS…AGHVYVAMPP (114 aa)) form the Toprim domain. The Mg(2+) site is built by Glu-417, Asp-489, and Asp-491.

It belongs to the type II topoisomerase family. ParE type 1 subfamily. Heterotetramer composed of ParC and ParE. Mg(2+) is required as a cofactor. It depends on Mn(2+) as a cofactor. Ca(2+) serves as cofactor.

The enzyme catalyses ATP-dependent breakage, passage and rejoining of double-stranded DNA.. Functionally, topoisomerase IV is essential for chromosome segregation. It relaxes supercoiled DNA. Performs the decatenation events required during the replication of a circular DNA molecule. In Pseudomonas aeruginosa (strain ATCC 15692 / DSM 22644 / CIP 104116 / JCM 14847 / LMG 12228 / 1C / PRS 101 / PAO1), this protein is DNA topoisomerase 4 subunit B.